A 184-amino-acid chain; its full sequence is Protein PLANT CADMIUM RESISTANCE 4 (184 aa).

The segment covering 1–10 has biased composition (polar residues); that stretch reads MGRPGSQPNE. The disordered stretch occupies residues 1-21; that stretch reads MGRPGSQPNEAQPPPVQVQPT. A helical membrane pass occupies residues 96–116; it reads GGLLYGMIFFIGVPFVYSCMF.

This sequence belongs to the cornifelin family.

It is found in the membrane. Its function is as follows. May be involved in heavy metals transport. This chain is Protein PLANT CADMIUM RESISTANCE 4 (PCR4), found in Arabidopsis thaliana (Mouse-ear cress).